Reading from the N-terminus, the 480-residue chain is Protein nucleotidyltransferase YdiU (480 aa).

The ATP site is built by G86, G88, R89, K109, D121, G122, R172, and R179. Catalysis depends on D248, which acts as the Proton acceptor. Mg(2+) is bound by residues N249 and D258. D258 is an ATP binding site.

The protein belongs to the SELO family. Mg(2+) is required as a cofactor. Mn(2+) serves as cofactor.

The enzyme catalyses L-seryl-[protein] + ATP = 3-O-(5'-adenylyl)-L-seryl-[protein] + diphosphate. The catalysed reaction is L-threonyl-[protein] + ATP = 3-O-(5'-adenylyl)-L-threonyl-[protein] + diphosphate. It carries out the reaction L-tyrosyl-[protein] + ATP = O-(5'-adenylyl)-L-tyrosyl-[protein] + diphosphate. It catalyses the reaction L-histidyl-[protein] + UTP = N(tele)-(5'-uridylyl)-L-histidyl-[protein] + diphosphate. The enzyme catalyses L-seryl-[protein] + UTP = O-(5'-uridylyl)-L-seryl-[protein] + diphosphate. The catalysed reaction is L-tyrosyl-[protein] + UTP = O-(5'-uridylyl)-L-tyrosyl-[protein] + diphosphate. Its function is as follows. Nucleotidyltransferase involved in the post-translational modification of proteins. It can catalyze the addition of adenosine monophosphate (AMP) or uridine monophosphate (UMP) to a protein, resulting in modifications known as AMPylation and UMPylation. The chain is Protein nucleotidyltransferase YdiU from Salmonella schwarzengrund (strain CVM19633).